Here is a 286-residue protein sequence, read N- to C-terminus: ATP synthase gamma chain (286 aa).

Belongs to the ATPase gamma chain family. As to quaternary structure, F-type ATPases have 2 components, CF(1) - the catalytic core - and CF(0) - the membrane proton channel. CF(1) has five subunits: alpha(3), beta(3), gamma(1), delta(1), epsilon(1). CF(0) has three main subunits: a, b and c.

The protein resides in the cell inner membrane. In terms of biological role, produces ATP from ADP in the presence of a proton gradient across the membrane. The gamma chain is believed to be important in regulating ATPase activity and the flow of protons through the CF(0) complex. In Pseudomonas fluorescens (strain Pf0-1), this protein is ATP synthase gamma chain.